A 453-amino-acid chain; its full sequence is Lipase 9 (453 aa).

Residues 1–14 (MLYLILFLIAPIYA) form the signal peptide. Asn36 carries an N-linked (GlcNAc...) asparagine glycan. Cys110 and Cys281 form a disulfide bridge. Catalysis depends on Ser194, which acts as the Charge relay system. N-linked (GlcNAc...) asparagine glycans are attached at residues Asn229, Asn266, and Asn269. Residues Asp343 and His376 each act as charge relay system in the active site. An intrachain disulfide couples Cys359 to Cys404. N-linked (GlcNAc...) asparagine glycosylation is present at Asn417.

Belongs to the AB hydrolase superfamily. Lipase family. Class Lip subfamily.

It is found in the secreted. The catalysed reaction is a triacylglycerol + H2O = a diacylglycerol + a fatty acid + H(+). Its function is as follows. Secreted lipase that is able to hydrolyze both the neutral triacylglycerols and the monopalmitate ester Tween 40, allowing the use of hydrolyzed products as carbon sources. Has broad lipolytic activity, which may be important for colonization and subsequent infection, therefore contributing to the persistence and virulence in human tissue. This Candida albicans (strain SC5314 / ATCC MYA-2876) (Yeast) protein is Lipase 9.